A 1645-amino-acid polypeptide reads, in one-letter code: MATDGASCEPDFSRAPEDAEGATAEAAKKEFDVDTLSKSELRMLLSVMEGELEARDLVIEALRARRKEVFIQERYGRFNLNDPFLALQRDYEAGAGEKEKKPVCTNPLSILEAVMAHCRKMQERMSTQLAAAESRQKKLEMEKLQLQGLEQEHKQLAARLEEERGKNKHVVLMLVKECKQLSGKVLDEAQKLEDVLARLEEEKKKTGTLEEQLSAEKRKSTEMEAQMEKQLSEFDTEREQLRAKLHREEAHTTDLKEEIDKMKKMIEQLKRGNDSKPSLSLPRKTKDRRSVSISVGTEGPVTRSVACQTDPAVESIDHVKKLPLTVPVKPPTGSPLVSANTKGNVCPSAALGRPGIDRQASHGDLIVSSLPTVPPPSASKIEENGPSTGSPSSTPPLPNSTAPPTVQTPTIAPQSHAQAAPGHSLHSPCANAALHPGLNPRIQAARFRFQGNANDPDQNGNTTQSPPSRDVSPTSRDSLVAKQLARNTVTQALSRFTSPPAGAPPRPGAPSTGDVGTCPPVGRTSLKTPGVARVDRGNPPPIPPKKPGLSQTPSPPHPQLKVIMDSSRASSAGAKVDNKTMASPPSTLPQGNRVINEENLPKSSSPQLPPKPSIDLTVAPAGCGVSALATSQVGAWPAETPGLSQPACSESSLVIPTTIAFCSSINPVSASSCRTGASDSLLVAASGWSPSLTPLLMSGGPAPLAGRPTLLQQAAAQGNVTLLSMLLNEEGLDINYSCEDGHSALYSAAKNGHTDCVRLLLNAEAQVNAADKNGFTPLCAAAAQGHFKCVELLIAYNANINHAADEGQTPLYLACKNGNKECIKHLLEAGTDRSVKTRDGWTPVHAAVDAGNVDSLKLLMYHRAPARRNSLHEEEPESGVFDLDQGEESPEGTSKPVIPADLINHADREGWTAAHIAASKGFKDCLEILCKHRGLEPERRDKCNRTAHDVATDDCKHLLENLNALKIPVRISGGESPPGNYGSDDFECENTICALNIRKQTSWEDFSKAVSQALTNHFQAISSDGWRSLEDGTFNNTTDSCIGLSTSSVRSVMLGNVPWSTGQSFSQSPWDFMKKNKAEQVTVFLSGPQEGCLSSVTYTSMIPLQMLQNYLRLVEQYHNVIFHGPEGSLQDYVAHQLALCMKHRQMAAGFTCEIVRAKVDAGFSKEQLGDLFISSACLIPVKQSPMNKKVIIVLENLEKCSLSELLGDFLAPLENRSTESPWILQKGNGTSECYYFHENCFLMGTIAKACLQGSDLLVQQHFRWVQLRWDGEPMQGLLPRFLRRKVMNKFRGQVPSPCDPVCKTVDWALAVWRQLNSCLARLGTPEALLGPEYFLSCPVVPGHAQATVKWMAKLWNAVIAPRVQEAVLSRASVRRQPGLGLTAARSRPSQGQQAVVKVALSILLNKAVLHGCPLQRADLDQHVADFKGGAFPLSIVSSYNSCSRKKGESGAWRKVSTSPRKKSGRFSPPSWSKPGPSEEGIKVKAISQLNYNRNASLSKQKSLENDLSLTLNLEQRLSLGSDDEADLVQELQSMCSSKSESDISKIADSRDDLRSFDSPGNSPAFSATVNPRMPVSPKEVSPFSSHQPTECSNSQSKMELGVSRVKSFLPVPRSKVTQCSQNTKRSSSSSNTRQIEINNNSKEEI.

Disordered stretches follow at residues 1 to 28 (MATDGASCEPDFSRAPEDAEGATAEAAK), 269 to 293 (LKRGNDSKPSLSLPRKTKDRRSVSI), 366 to 435 (IVSS…AALH), 451 to 478 (GNANDPDQNGNTTQSPPSRDVSPTSRDS), and 492 to 612 (ALSR…PPKP). Residues 119-276 (RKMQERMSTQ…EQLKRGNDSK (158 aa)) are a coiled coil. Composition is skewed to polar residues over residues 407 to 417 (QTPTIAPQSHA) and 451 to 477 (GNANDPDQNGNTTQSPPSRDVSPTSRD). R495 carries the post-translational modification Asymmetric dimethylarginine. Positions 580-590 (TMASPPSTLPQ) are enriched in polar residues. 6 ANK repeats span residues 706–736 (GRPTLLQQAAAQGNVTLLSMLLNEEGLDINY), 740–769 (DGHSALYSAAKNGHTDCVRLLLNAEAQVNA), 773–802 (NGFTPLCAAAAQGHFKCVELLIAYNANINH), 806–835 (EGQTPLYLACKNGNKECIKHLLEAGTDRSV), 839–868 (DGWTPVHAAVDAGNVDSLKLLMYHRAPARR), and 909–939 (EGWTAAHIAASKGFKDCLEILCKHRGLEPER). Residues 868–898 (RNSLHEEEPESGVFDLDQGEESPEGTSKPVI) are disordered. The segment at 1442-1479 (CSRKKGESGAWRKVSTSPRKKSGRFSPPSWSKPGPSEE) is disordered. The residue at position 1521 (S1521) is a Phosphoserine. Residues 1551-1645 (DDLRSFDSPG…EINNNSKEEI (95 aa)) are disordered. Polar residues-rich tracts occupy residues 1558–1569 (SPGNSPAFSATV) and 1582–1597 (PFSSHQPTECSNSQSK). The segment covering 1620-1634 (SQNTKRSSSSSNTRQ) has biased composition (low complexity). The span at 1635–1645 (IEINNNSKEEI) shows a compositional bias: polar residues.

As to quaternary structure, interacts with CTTN/cortactin SH3 domain. Interacts with STRN, STRN4/zinedin and MOB4/phocein; this interactions mediate the association with the STRIPAK core complex and may regulate dendritic spine distribution of the STRIPAK complex in hippocampal neurons. Activation of glutamate receptors weakens the interaction with STRN and STRN4.

The protein localises to the cytoplasm. The protein resides in the cell cortex. It localises to the cell projection. Its subcellular location is the dendritic spine. Its function is as follows. Regulates the dendritic spine distribution of CTTN/cortactin in hippocampal neurons, and thus controls dendritic spinogenesis and dendritic spine maintenance. Associates with the striatin-interacting phosphatase and kinase (STRIPAK) core complex to regulate dendritic spine distribution of the STRIPAK complex in hippocampal neurons. This chain is Cortactin-binding protein 2 (CTTNBP2), found in Mustela putorius furo (European domestic ferret).